A 141-amino-acid chain; its full sequence is D-aminoacyl-tRNA deacylase (141 aa).

The Gly-cisPro motif, important for rejection of L-amino acids signature appears at 133-134 (GP).

It belongs to the DTD family. As to quaternary structure, homodimer.

It localises to the cytoplasm. It carries out the reaction glycyl-tRNA(Ala) + H2O = tRNA(Ala) + glycine + H(+). The catalysed reaction is a D-aminoacyl-tRNA + H2O = a tRNA + a D-alpha-amino acid + H(+). An aminoacyl-tRNA editing enzyme that deacylates mischarged D-aminoacyl-tRNAs. Also deacylates mischarged glycyl-tRNA(Ala), protecting cells against glycine mischarging by AlaRS. Acts via tRNA-based rather than protein-based catalysis; rejects L-amino acids rather than detecting D-amino acids in the active site. By recycling D-aminoacyl-tRNA to D-amino acids and free tRNA molecules, this enzyme counteracts the toxicity associated with the formation of D-aminoacyl-tRNA entities in vivo and helps enforce protein L-homochirality. This chain is D-aminoacyl-tRNA deacylase, found in Kineococcus radiotolerans (strain ATCC BAA-149 / DSM 14245 / SRS30216).